The following is a 489-amino-acid chain: Cytochrome P450 monooxygenase prhB (489 aa).

3 helical membrane-spanning segments follow: residues 1–21, 212–232, and 287–307; these read MFSF…KVIY, VIFQ…MIFA, and LFIG…AYLL. 2 N-linked (GlcNAc...) asparagine glycosylation sites follow: Asn-347 and Asn-379. Cys-431 contributes to the heme binding site.

It belongs to the cytochrome P450 family. Heme serves as cofactor.

The protein localises to the membrane. It participates in secondary metabolite biosynthesis; terpenoid biosynthesis. Functionally, cytochrome P450 monooxygenase; part of the gene cluster that mediates the biosynthesis of paraherquonin, a meroterpenoid with a unique, highly congested hexacyclic molecular architecture. The first step of the pathway is the synthesis of 3,5-dimethylorsellinic acid (DMOA) by the polyketide synthase prhL. Synthesis of DMOA is followed by farnesylation by the prenyltransferase prhE, methylesterification by the methyl-transferase prhM, epoxidation of the prenyl chain by the flavin-dependent monooxygenase prhF, and cyclization of the farnesyl moiety by the terpene cyclase prhH, to yield the tetracyclic intermediate, protoaustinoid A. The short chain dehydrogenase prhI then oxidizes the C-3 alcohol group of the terpene cyclase product to transform protoaustinoid A into protoaustinoid B. The FAD-binding monooxygenase prhJ catalyzes the oxidation of protoaustinoid B into preaustinoid A which is further oxidized into preaustinoid A1 by FAD-binding monooxygenase phrK. Finally, prhA leads to berkeleydione via the berkeleyone B intermediate. PrhA is a multifunctional dioxygenase that first desaturates at C5-C6 to form berkeleyone B, followed by rearrangement of the A/B-ring to form the cycloheptadiene moiety in berkeleydione. Berkeleydione serves as the key intermediate for the biosynthesis of paraherquonin as well as many other meroterpenoids. The cytochrome P450 monooxygenases prhB, prhD, and prhN, as well as the isomerase prhC, are probably involved in the late stage of paraherquonin biosynthesis, after the production of berkeleydione. Especially prhC might be a multifunctional enzyme that catalyzes the D-ring expansion via intramolecular methoxy rearrangement, as well as the hydrolysis of the expanded D-ring. This Penicillium brasilianum protein is Cytochrome P450 monooxygenase prhB.